The sequence spans 194 residues: Imidazoleglycerol-phosphate dehydratase (194 aa).

The protein belongs to the imidazoleglycerol-phosphate dehydratase family.

Its subcellular location is the cytoplasm. It carries out the reaction D-erythro-1-(imidazol-4-yl)glycerol 3-phosphate = 3-(imidazol-4-yl)-2-oxopropyl phosphate + H2O. The protein operates within amino-acid biosynthesis; L-histidine biosynthesis; L-histidine from 5-phospho-alpha-D-ribose 1-diphosphate: step 6/9. The chain is Imidazoleglycerol-phosphate dehydratase from Streptococcus gordonii (strain Challis / ATCC 35105 / BCRC 15272 / CH1 / DL1 / V288).